Consider the following 228-residue polypeptide: Uracil-DNA glycosylase (228 aa).

Asp-64 (proton acceptor) is an active-site residue.

It belongs to the uracil-DNA glycosylase (UDG) superfamily. UNG family.

Its subcellular location is the cytoplasm. It carries out the reaction Hydrolyzes single-stranded DNA or mismatched double-stranded DNA and polynucleotides, releasing free uracil.. Functionally, excises uracil residues from the DNA which can arise as a result of misincorporation of dUMP residues by DNA polymerase or due to deamination of cytosine. The chain is Uracil-DNA glycosylase from Pectobacterium atrosepticum (strain SCRI 1043 / ATCC BAA-672) (Erwinia carotovora subsp. atroseptica).